The chain runs to 232 residues: Chromosome partition protein MukE (232 aa).

A disordered region spans residues 203-232 (HTKEPSQGSLLSEEDQEEQAQEEMTEEGEA). Residues 214 to 232 (SEEDQEEQAQEEMTEEGEA) show a composition bias toward acidic residues.

Belongs to the MukE family. As to quaternary structure, interacts, and probably forms a ternary complex, with MukF and MukB. The complex formation is stimulated by calcium or magnesium.

The protein localises to the cytoplasm. The protein resides in the nucleoid. In terms of biological role, involved in chromosome condensation, segregation and cell cycle progression. May participate in facilitating chromosome segregation by condensation DNA from both sides of a centrally located replisome during cell division. Probably acts via its interaction with MukB and MukF. This Vibrio parahaemolyticus serotype O3:K6 (strain RIMD 2210633) protein is Chromosome partition protein MukE.